The chain runs to 147 residues: Small ribosomal subunit protein uS5 (147 aa).

An S5 DRBM domain is found at 9-72 (FEEVIVDIGR…DDAFKNIIHV (64 aa)).

It belongs to the universal ribosomal protein uS5 family. Part of the 30S ribosomal subunit. Contacts proteins S4 and S8.

Its function is as follows. With S4 and S12 plays an important role in translational accuracy. Located at the back of the 30S subunit body where it stabilizes the conformation of the head with respect to the body. In Campylobacter curvus (strain 525.92), this protein is Small ribosomal subunit protein uS5.